A 139-amino-acid polypeptide reads, in one-letter code: D-ribose pyranase (139 aa).

His-20 acts as the Proton donor in catalysis. Substrate is bound by residues Asp-28, His-106, and 128–130 (YAN).

Belongs to the RbsD / FucU family. RbsD subfamily. Homodecamer.

The protein localises to the cytoplasm. It catalyses the reaction beta-D-ribopyranose = beta-D-ribofuranose. It functions in the pathway carbohydrate metabolism; D-ribose degradation; D-ribose 5-phosphate from beta-D-ribopyranose: step 1/2. In terms of biological role, catalyzes the interconversion of beta-pyran and beta-furan forms of D-ribose. This Salmonella arizonae (strain ATCC BAA-731 / CDC346-86 / RSK2980) protein is D-ribose pyranase.